The following is a 662-amino-acid chain: Aprataxin-like protein (662 aa).

In terms of domain architecture, HIT spans 4–108 (SSALIKDISK…ISKDFVSTSL (105 aa)). The C2H2-type zinc finger occupies 381-403 (LRCNQCEFVTNMLLDLKAHLYQH). Residues 482 to 662 (KNINGPSVNM…PAPPSNSKPS (181 aa)) are disordered. Residues 490–500 (NMMNQNNPNNP) are compositionally biased toward low complexity. Polar residues-rich tracts occupy residues 501 to 513 (FRNTPHLNRQSQK) and 560 to 569 (GHQQFPNASS). Residues 570–582 (VGGGQTGLPGQGQ) show a composition bias toward gly residues. Residues 588–599 (WNSNKIFNQQNR) show a composition bias toward polar residues. Residues 600–626 (QNTVQAQPQAQNQQTNQQQIQNSNKNQ) are compositionally biased toward low complexity. The span at 653-662 (PAPPSNSKPS) shows a compositional bias: pro residues.

Its subcellular location is the nucleus. Functionally, DNA-binding protein involved in single-strand DNA break repair, double-strand DNA break repair and base excision repair. Resolves abortive DNA ligation intermediates formed either at base excision sites, or when DNA ligases attempt to repair non-ligatable breaks induced by reactive oxygen species. Catalyzes the release of adenylate groups covalently linked to 5'-phosphate termini, resulting in the production of 5'-phosphate termini that can be efficiently rejoined. The sequence is that of Aprataxin-like protein from Drosophila melanogaster (Fruit fly).